A 348-amino-acid polypeptide reads, in one-letter code: Sex-lethal homolog (348 aa).

RRM domains follow at residues 110–188 and 196–276; these read TNLI…YARP and TNLY…LAEE. Positions 296 to 310 are enriched in gly residues; it reads GGGGGGGGGGGGGMG. The segment at 296 to 317 is disordered; sequence GGGGGGGGGGGGGMGGPPPPPM.

The protein resides in the nucleus. Functionally, unknown; apparently not involved in somatic sex determination. This is Sex-lethal homolog (SXL) from Ceratitis capitata (Mediterranean fruit fly).